A 147-amino-acid chain; its full sequence is Hemoglobin subunit delta (147 aa).

Residues 3 to 147 (HLTPDEKNAV…VATALAHKYH (145 aa)) enclose the Globin domain. A Phosphoserine modification is found at Ser-51. Positions 64 and 93 each coordinate heme b.

The protein belongs to the globin family. Heterotetramer of two delta chains and two alpha chains. As to expression, red blood cells.

The protein is Hemoglobin subunit delta (HBD) of Otolemur crassicaudatus (Brown greater galago).